A 224-amino-acid polypeptide reads, in one-letter code: Deoxyribose-phosphate aldolase (224 aa).

Residue Asp-94 is the Proton donor/acceptor of the active site. Lys-158 serves as the catalytic Schiff-base intermediate with acetaldehyde. Lys-187 acts as the Proton donor/acceptor in catalysis.

It belongs to the DeoC/FbaB aldolase family. DeoC type 1 subfamily. As to quaternary structure, homodimer.

The protein localises to the cytoplasm. The catalysed reaction is 2-deoxy-D-ribose 5-phosphate = D-glyceraldehyde 3-phosphate + acetaldehyde. Its activity is regulated as follows. Activated by citrate. Inhibited by NaBH(4). Activity is independent of divalent metal cations. Its function is as follows. Catalyzes a reversible aldol reaction between acetaldehyde and D-glyceraldehyde 3-phosphate to generate 2-deoxy-D-ribose 5-phosphate. Could be involved in pentose biosynthesis. The chain is Deoxyribose-phosphate aldolase from Thermococcus kodakarensis (strain ATCC BAA-918 / JCM 12380 / KOD1) (Pyrococcus kodakaraensis (strain KOD1)).